The chain runs to 266 residues: 3-methyl-2-oxobutanoate hydroxymethyltransferase 2 (266 aa).

Mg(2+) contacts are provided by D45 and D84. 3-methyl-2-oxobutanoate contacts are provided by residues 45 to 46 (DS), D84, and K112. E114 is a binding site for Mg(2+). The active-site Proton acceptor is E181.

Belongs to the PanB family. As to quaternary structure, homodecamer; pentamer of dimers. Mg(2+) is required as a cofactor.

It localises to the cytoplasm. It catalyses the reaction 3-methyl-2-oxobutanoate + (6R)-5,10-methylene-5,6,7,8-tetrahydrofolate + H2O = 2-dehydropantoate + (6S)-5,6,7,8-tetrahydrofolate. Its pathway is cofactor biosynthesis; (R)-pantothenate biosynthesis; (R)-pantoate from 3-methyl-2-oxobutanoate: step 1/2. Its function is as follows. Catalyzes the reversible reaction in which hydroxymethyl group from 5,10-methylenetetrahydrofolate is transferred onto alpha-ketoisovalerate to form ketopantoate. The sequence is that of 3-methyl-2-oxobutanoate hydroxymethyltransferase 2 from Pseudomonas fluorescens (strain ATCC BAA-477 / NRRL B-23932 / Pf-5).